We begin with the raw amino-acid sequence, 456 residues long: 3-isopropylmalate dehydratase large subunit (456 aa).

The [4Fe-4S] cluster site is built by C336, C396, and C399.

The protein belongs to the aconitase/IPM isomerase family. LeuC type 1 subfamily. As to quaternary structure, heterodimer of LeuC and LeuD. [4Fe-4S] cluster is required as a cofactor.

The catalysed reaction is (2R,3S)-3-isopropylmalate = (2S)-2-isopropylmalate. It functions in the pathway amino-acid biosynthesis; L-leucine biosynthesis; L-leucine from 3-methyl-2-oxobutanoate: step 2/4. Catalyzes the isomerization between 2-isopropylmalate and 3-isopropylmalate, via the formation of 2-isopropylmaleate. This chain is 3-isopropylmalate dehydratase large subunit, found in Staphylococcus haemolyticus (strain JCSC1435).